Reading from the N-terminus, the 259-residue chain is Exosome complex component Rrp42 (259 aa).

This sequence belongs to the RNase PH family. Rrp42 subfamily. As to quaternary structure, component of the archaeal exosome complex. Forms a hexameric ring-like arrangement composed of 3 Rrp41-Rrp42 heterodimers. The hexameric ring associates with a trimer of Rrp4 and/or Csl4 subunits.

It localises to the cytoplasm. In terms of biological role, non-catalytic component of the exosome, which is a complex involved in RNA degradation. Contributes to the structuring of the Rrp41 active site. This chain is Exosome complex component Rrp42, found in Archaeoglobus fulgidus (strain ATCC 49558 / DSM 4304 / JCM 9628 / NBRC 100126 / VC-16).